Reading from the N-terminus, the 525-residue chain is Chromosomal replication initiator protein DnaA (525 aa).

The domain I, interacts with DnaA modulators stretch occupies residues 1–71; it reads MNDFWQHCSA…ADLAREFWNT (71 aa). A domain II region spans residues 71-188; the sequence is TPIEVQFVLD…AEADSMYERS (118 aa). A disordered region spans residues 160–181; the sequence is AAAGRRTWRPGPGAAPANGAEA. The segment covering 169 to 181 has biased composition (low complexity); that stretch reads PGPGAAPANGAEA. Residues 189–405 are domain III, AAA+ region; sequence KLNPVLTFDN…GALRKILAYS (217 aa). ATP is bound by residues glycine 233, glycine 235, lysine 236, and threonine 237. The interval 406–525 is domain IV, binds dsDNA; that stretch reads KFHGREISIE…LHVLEQTLKG (120 aa).

It belongs to the DnaA family. Oligomerizes as a right-handed, spiral filament on DNA at oriC.

It is found in the cytoplasm. Functionally, plays an essential role in the initiation and regulation of chromosomal replication. ATP-DnaA binds to the origin of replication (oriC) to initiate formation of the DNA replication initiation complex once per cell cycle. Binds the DnaA box (a 9 base pair repeat at the origin) and separates the double-stranded (ds)DNA. Forms a right-handed helical filament on oriC DNA; dsDNA binds to the exterior of the filament while single-stranded (ss)DNA is stabiized in the filament's interior. The ATP-DnaA-oriC complex binds and stabilizes one strand of the AT-rich DNA unwinding element (DUE), permitting loading of DNA polymerase. After initiation quickly degrades to an ADP-DnaA complex that is not apt for DNA replication. Binds acidic phospholipids. This chain is Chromosomal replication initiator protein DnaA, found in Burkholderia vietnamiensis (strain G4 / LMG 22486) (Burkholderia cepacia (strain R1808)).